A 184-amino-acid polypeptide reads, in one-letter code: dCTP deaminase (184 aa).

DCTP is bound by residues 107 to 112, 131 to 133, glutamine 152, tyrosine 166, and glutamine 176; these read KSTYAR and TLE. The active-site Proton donor/acceptor is the glutamate 133.

It belongs to the dCTP deaminase family. As to quaternary structure, homotrimer.

It catalyses the reaction dCTP + H2O + H(+) = dUTP + NH4(+). The protein operates within pyrimidine metabolism; dUMP biosynthesis; dUMP from dCTP (dUTP route): step 1/2. Its function is as follows. Catalyzes the deamination of dCTP to dUTP. This is dCTP deaminase from Erythrobacter litoralis (strain HTCC2594).